A 348-amino-acid polypeptide reads, in one-letter code: MIKAGIVGGTGYTGVELLRLLAKHPQVEVSVITSRAEAGVKVADLFPNLRGHVDLAFTEPDVNILGQCDVVFFATPHGVAQNMMPVLMKTGTRIVDLSADFRIRDVPLWEKWYGQTHGAPDLVSQAVYGLPEVNRDAIRSAKLVACPGCYPTATQLGFLPLIENNLVDPSRLIANAASGASGAGRQAKIDNLLMEISDSFKAYGVKGHRHLPEIEQGLRDVQPAGVAAAQLTFVPHLLPIIRGIHATLYATLLDVNQVPDLQSLYQQRYANEPFVDVLPAGEMPQTRSVKGSNVCRISVFRPQARDTVVVLSVIDNLTKGASGQAIQNMNIMFGFDETAGLDVVALLP.

The active site involves C149.

The protein belongs to the NAGSA dehydrogenase family. Type 1 subfamily.

It is found in the cytoplasm. It catalyses the reaction N-acetyl-L-glutamate 5-semialdehyde + phosphate + NADP(+) = N-acetyl-L-glutamyl 5-phosphate + NADPH + H(+). Its pathway is amino-acid biosynthesis; L-arginine biosynthesis; N(2)-acetyl-L-ornithine from L-glutamate: step 3/4. Its function is as follows. Catalyzes the NADPH-dependent reduction of N-acetyl-5-glutamyl phosphate to yield N-acetyl-L-glutamate 5-semialdehyde. The sequence is that of N-acetyl-gamma-glutamyl-phosphate reductase from Cellvibrio japonicus (strain Ueda107) (Pseudomonas fluorescens subsp. cellulosa).